Consider the following 480-residue polypeptide: Ribulose bisphosphate carboxylase large chain (480 aa).

Residues 1-2 (MS) constitute a propeptide that is removed on maturation. N-acetylproline is present on P3. K14 bears the N6,N6,N6-trimethyllysine mark. Substrate-binding residues include N123 and T173. K175 (proton acceptor) is an active-site residue. Substrate is bound at residue K177. Residues K201, D203, and E204 each coordinate Mg(2+). The residue at position 201 (K201) is an N6-carboxylysine. H294 (proton acceptor) is an active-site residue. Positions 295, 327, and 379 each coordinate substrate.

This sequence belongs to the RuBisCO large chain family. Type I subfamily. In terms of assembly, heterohexadecamer of 8 large chains and 8 small chains; disulfide-linked. The disulfide link is formed within the large subunit homodimers. Requires Mg(2+) as cofactor. In terms of processing, the disulfide bond which can form in the large chain dimeric partners within the hexadecamer appears to be associated with oxidative stress and protein turnover.

Its subcellular location is the plastid. The protein resides in the chloroplast. It catalyses the reaction 2 (2R)-3-phosphoglycerate + 2 H(+) = D-ribulose 1,5-bisphosphate + CO2 + H2O. The enzyme catalyses D-ribulose 1,5-bisphosphate + O2 = 2-phosphoglycolate + (2R)-3-phosphoglycerate + 2 H(+). In terms of biological role, ruBisCO catalyzes two reactions: the carboxylation of D-ribulose 1,5-bisphosphate, the primary event in carbon dioxide fixation, as well as the oxidative fragmentation of the pentose substrate in the photorespiration process. Both reactions occur simultaneously and in competition at the same active site. The protein is Ribulose bisphosphate carboxylase large chain of Mollugo verticillata (Green carpetweed).